Reading from the N-terminus, the 2092-residue chain is Nonribosomal peptide synthetase echPS (2092 aa).

The adenylation 1 stretch occupies residues 13–406 (FSQRCCQNPD…GRRDRVTKIR (394 aa)). Positions 524-600 (SGPLTIGQAI…SLIEKSRHET (77 aa)) constitute a Carrier 1 domain. Residue Ser561 is modified to O-(pantetheine 4'-phosphoryl)serine. The segment at 596–626 (SRHETEDTPDSSAFATRTPEESSMPTQGPVT) is disordered. Residues 605–624 (DSSAFATRTPEESSMPTQGP) show a composition bias toward polar residues. Residues 624–1017 (PVTPLQKRMV…YTSLLDAFLD (394 aa)) are condensation 1. Positions 1068–1446 (ASLYPTHVAV…GRKDRQVKVR (379 aa)) are adenylation 2. The Carrier 2 domain occupies 1544–1622 (IKTTHLEKLI…DLVILVAQQQ (79 aa)). Ser1582 bears the O-(pantetheine 4'-phosphoryl)serine mark. Residues 1663-2047 (SQSQSTFNVS…EALLLECFRI (385 aa)) are condensation 2.

This sequence belongs to the NRP synthetase family. Pantetheine 4'-phosphate serves as cofactor.

The catalysed reaction is L-tryptophan + L-alanine + 2 ATP = cyclo(L-tryptophyl-L-alanyl) + 2 ADP + 2 phosphate + 2 H(+). It participates in secondary metabolite biosynthesis. The protein operates within alkaloid biosynthesis. In terms of biological role, nonribosomal peptide synthetase; part of the gene cluster that mediates the biosynthesis of echinulin family alkaloid. The pathway begins with the biosynthesis of the cyclic dipeptide cyclo-L-Trp-L-Ala (cyclo-TA) by the NRPS echPS via condensation of L-alanine and L-tryptophan. The prenyltransferase echPT1 then catalyzes the first prenylation step, a reverse prenylation reaction at C2, to yield preechinulin. Preechinulin is the substrate of the cytochrome P450 monooxygenase echP450 that catalyzes the formation of the double bond between C10 and C11 to produce neoechulin A. The unique prenyltransferase echPT2 functions as a competitive enzyme with echP450 for preechinulin metabolization and uses preechinulin for effective regiospecific prenylations. Preechinulin is prenylated by echPT2 at C5 or C7. C7-prenylation leads to accumulation of tardioxopiperazine B without further modification by echPT2. In contrast, the C5-prenylated tardioxopiperazine A can be prenylated again by echPT2, predominantly at C7 to form echinulin or less frequently at C4 to give variecolorin L. EchPT2 also accepts neoechilunin A to produce varlecolorin G (prenylation at C5) or isoechinulin A (prenylation at C7). EchPT2 further converts isoechinulin A into dehydroechinulin. Moreover, a yet unidentified enzyme can also convert neoechilunin A into neoechilunin B by introducing a double bond between positions C14 and C17 and thus provides a further substrate to echPT2 for C5 and C7 prenylation. The sequence is that of Nonribosomal peptide synthetase echPS from Aspergillus ruber (strain CBS 135680).